We begin with the raw amino-acid sequence, 20 residues long: Venom prothrombin activator notanarin-D (20 aa).

The Gla domain occupies 1 to 10 (SNSLFEEVRP). 4-carboxyglutamate occurs at positions 6 and 7. The Peptidase S1 domain occupies 11-20 (IVNGMDCKLG).

The protein belongs to the peptidase S1 family. Snake venom subfamily. Heterodimer of a light chain and a heavy chain; disulfide-linked. In terms of processing, gamma-carboxyglutamate residues are formed by vitamin K dependent carboxylation. These residues are essential for the binding of calcium. Expressed by the venom gland.

The protein localises to the secreted. It catalyses the reaction Selective cleavage of Arg-|-Thr and then Arg-|-Ile bonds in prothrombin to form thrombin.. Functionally, snake prothrombin activator that attacks the hemostatic system of prey. This protein is functionally similar to blood coagulation factor Xa. The sequence is that of Venom prothrombin activator notanarin-D from Notechis scutatus niger (Peninsula tiger snake).